The sequence spans 453 residues: Kynureninase (453 aa).

Residues Leu111, Thr112, 139–142 (FPSD), Ser196, Asp226, His229, and Tyr251 each bind pyridoxal 5'-phosphate. Residue Lys252 is modified to N6-(pyridoxal phosphate)lysine. Positions 286 and 314 each coordinate pyridoxal 5'-phosphate.

It belongs to the kynureninase family. Homodimer. Requires pyridoxal 5'-phosphate as cofactor.

It localises to the cytoplasm. Its subcellular location is the nucleus. It catalyses the reaction L-kynurenine + H2O = anthranilate + L-alanine + H(+). The catalysed reaction is 3-hydroxy-L-kynurenine + H2O = 3-hydroxyanthranilate + L-alanine + H(+). Its pathway is amino-acid degradation; L-kynurenine degradation; L-alanine and anthranilate from L-kynurenine: step 1/1. It functions in the pathway cofactor biosynthesis; NAD(+) biosynthesis; quinolinate from L-kynurenine: step 2/3. Its function is as follows. Catalyzes the cleavage of L-kynurenine (L-Kyn) and L-3-hydroxykynurenine (L-3OHKyn) into anthranilic acid (AA) and 3-hydroxyanthranilic acid (3-OHAA), respectively. This Saccharomyces cerevisiae (strain ATCC 204508 / S288c) (Baker's yeast) protein is Kynureninase.